A 277-amino-acid polypeptide reads, in one-letter code: Tryptophan synthase alpha chain (277 aa).

Catalysis depends on proton acceptor residues glutamate 42 and glutamate 53.

The protein belongs to the TrpA family. Tetramer of two alpha and two beta chains.

The enzyme catalyses (1S,2R)-1-C-(indol-3-yl)glycerol 3-phosphate + L-serine = D-glyceraldehyde 3-phosphate + L-tryptophan + H2O. Its pathway is amino-acid biosynthesis; L-tryptophan biosynthesis; L-tryptophan from chorismate: step 5/5. In terms of biological role, the alpha subunit is responsible for the aldol cleavage of indoleglycerol phosphate to indole and glyceraldehyde 3-phosphate. The protein is Tryptophan synthase alpha chain of Natronomonas pharaonis (strain ATCC 35678 / DSM 2160 / CIP 103997 / JCM 8858 / NBRC 14720 / NCIMB 2260 / Gabara) (Halobacterium pharaonis).